Here is a 244-residue protein sequence, read N- to C-terminus: ATP-dependent Clp protease ATP-binding subunit CLPT4, chloroplastic (244 aa).

The transit peptide at 1 to 64 (MQALQASRLT…WRSSGRVITR (64 aa)) directs the protein to the chloroplast. Low complexity predominate over residues 30-48 (SRPISSGVSSSQELSSRSS). 2 disordered regions span residues 30-55 (SRPI…TKSW) and 220-244 (GRRY…VSFL).

This sequence belongs to the ClpA/ClpB family.

It localises to the plastid. Its subcellular location is the chloroplast. Functionally, accessory protein regulating the assembly of the plastid Clp protease system. This chain is ATP-dependent Clp protease ATP-binding subunit CLPT4, chloroplastic, found in Chlamydomonas reinhardtii (Chlamydomonas smithii).